Here is a 304-residue protein sequence, read N- to C-terminus: MFSVLSYGRLVARAVLGGLSQTDPRAGGGGGGDYGLVTAGCGFGKDFRKGLLKKGACYGDDACFVARHRSADVLGVADGVGGWRDYGVDPSQFSGTLMRTCERLVKEGRFVPSNPIGILTTSYCELLQNKVPLLGSSTACIVVLDRTSHRLHTANLGDSGFLVVRGGEVVHRSDEQQHYFNTPFQLSIAPPEAEGVVLSDSPDAADSTSFDVQLGDIILTATDGLFDNMPDYMILQELKKLKNSNYESIQQTARSIAEQAHELAYDPNYMSPFAQFACDNGLNVRGGKPDDITVLLSIVAEYTD.

The transit peptide at 1–68 (MFSVLSYGRL…GDDACFVARH (68 aa)) directs the protein to the mitochondrion. One can recognise a PPM-type phosphatase domain in the interval 69-299 (RSADVLGVAD…DDITVLLSIV (231 aa)). Mn(2+) contacts are provided by aspartate 78, glycine 79, and aspartate 223.

The protein belongs to the PP2C family. Interacts with FBXL4, BNIP3 and NIX; these interactions are important for ubiquitination and degradation of BNIP3 and NIX. Mg(2+) is required as a cofactor. It depends on Mn(2+) as a cofactor. Expressed in keratinocytes (at protein level).

The protein resides in the mitochondrion matrix. The catalysed reaction is O-phospho-L-seryl-[protein] + H2O = L-seryl-[protein] + phosphate. It catalyses the reaction O-phospho-L-threonyl-[protein] + H2O = L-threonyl-[protein] + phosphate. Its activity is regulated as follows. Inhibited by sodium orthovanadate. In terms of biological role, protein phosphatase that plays an essential role in mitochondrial metabolism and biogenesis. Positively regulates biosynthesis of the ubiquinone, coenzyme Q. Dephosphorylates the ubiquinone biosynthesis protein COQ7 which is likely to lead to its activation. Serves as a crucial sensor for mitophagy, though the underlying mechanism remains ambiguous. May dephosphorylate BNIP3 and NIX and thereby directly regulates mitophagy receptor function and stability. Alternatively, promotes SCF-FBXL4-dependent ubiquitination and degradation of BNIP3 and NIX independently of its catalytic activity to restrain mitophagy. The protein is Protein phosphatase PTC7 homolog (PPTC7) of Homo sapiens (Human).